Consider the following 499-residue polypeptide: Cytochrome P450 76T24 (499 aa).

A helical membrane pass occupies residues 3 to 23 (VDILLSLVLAFFGWAAIYFLT). N-linked (GlcNAc...) asparagine glycosylation is found at Asn55, Asn76, Asn279, and Asn284. Residue Cys442 participates in heme binding.

Belongs to the cytochrome P450 family.

The protein resides in the membrane. This chain is Cytochrome P450 76T24, found in Catharanthus roseus (Madagascar periwinkle).